Consider the following 164-residue polypeptide: LWamide neuropeptides (164 aa).

The propeptide occupies 1–6 (RSADAQ). Positions 1 to 92 (RSADAQQHGL…WGRSADAQQP (92 aa)) are disordered. A tryptophan amide mark is found at Trp11 and Trp20. Positions 23–27 (SADAQ) are excised as a propeptide. Trp32 and Trp41 each carry tryptophan amide. Residues 44–49 (SAEPGQ) constitute a propeptide that is removed on maturation. A tryptophan amide mark is found at Trp53 and Trp62. The propeptide occupies 65–70 (SAEPLQ). Trp74 and Trp83 each carry tryptophan amide. Residues 86–90 (SADAQ) constitute a propeptide that is removed on maturation. Tryptophan amide occurs at positions 95, 106, and 115. A propeptide spanning residues 118-123 (SADPGQ) is cleaved from the precursor. A tryptophan amide mark is found at Trp127 and Trp137. Positions 140–164 (SYEPPQFEDLEDLKKKSAIPKPSEQ) are excised as a propeptide.

Belongs to the LWamide neuropeptide family.

Its subcellular location is the secreted. Metamorphosin A may be part of an internal signaling system involved in control of metamorphosis. The protein is LWamide neuropeptides of Actinia equina (Beadlet anemone).